Reading from the N-terminus, the 133-residue chain is Large-conductance mechanosensitive channel (133 aa).

Helical transmembrane passes span A17–F37 and I73–A93.

The protein belongs to the MscL family. As to quaternary structure, homopentamer.

The protein localises to the cell inner membrane. Functionally, channel that opens in response to stretch forces in the membrane lipid bilayer. May participate in the regulation of osmotic pressure changes within the cell. The protein is Large-conductance mechanosensitive channel of Synechococcus elongatus (strain ATCC 33912 / PCC 7942 / FACHB-805) (Anacystis nidulans R2).